The primary structure comprises 402 residues: Multidrug resistance protein MdtH (402 aa).

The Cytoplasmic segment spans residues 1-12 (MSRVSQARNLGK). A helical transmembrane segment spans residues 13–33 (YFLLIDNMLVVLGFFVVFPLI). The Periplasmic segment spans residues 34 to 98 (SIRFVDQMGW…GFATMGIAHE (65 aa)). The chain crosses the membrane as a helical span at residues 99–116 (PWLLWFSCFLSGLGGTLF). Over 117-138 (DPPRSALVVKLIRPEQRGRFFS) the chain is Cytoplasmic. Residues 139–159 (LLMMQDSAGAVIGALLGSWLL) traverse the membrane as a helical segment. Residues 160-164 (QYDFR) lie on the Periplasmic side of the membrane. A helical transmembrane segment spans residues 165 to 185 (LVCATGAILFILCALFNAWLL). Topologically, residues 186–213 (PAWKLSTVRTPVREGMRRVMSDKRFVTY) are cytoplasmic. A helical membrane pass occupies residues 214-234 (VLTLAGYYMLAVQVMLMLPIM). The Periplasmic portion of the chain corresponds to 235 to 243 (VNDIAGSPA). The chain crosses the membrane as a helical span at residues 244-264 (AVKWMYAIEACLSLTLLYPIA). Residues 265 to 276 (RWSEKRFRLEHR) are Cytoplasmic-facing. Residues 277 to 297 (LMAGLLVMSLSMIPIGMVGNL) form a helical membrane-spanning segment. At 298–299 (QQ) the chain is on the periplasmic side. Residues 300 to 320 (LFTLICAFYIGSVIAEPARET) traverse the membrane as a helical segment. The Cytoplasmic portion of the chain corresponds to 321–339 (LSASLADARARGSYMGFSR). The helical transmembrane segment at 340–360 (LGLAIGGAIGYIGGGWLFDMG) threads the bilayer. Residues 361–367 (KALAQPE) are Periplasmic-facing. The chain crosses the membrane as a helical span at residues 368–388 (LPWMMLGIIGFITFLALGWQF). At 389–402 (SHKRTPRRMLEPGA) the chain is on the cytoplasmic side.

This sequence belongs to the major facilitator superfamily. DHA1 family. MdtH (TC 2.A.1.2.21) subfamily.

It is found in the cell inner membrane. In Salmonella schwarzengrund (strain CVM19633), this protein is Multidrug resistance protein MdtH.